Here is a 129-residue protein sequence, read N- to C-terminus: Protein RfbJ (129 aa).

It belongs to the glycosyltransferase 2 family.

The protein operates within bacterial outer membrane biogenesis; lipopolysaccharide biosynthesis. The chain is Protein RfbJ (rfbJ) from Shigella flexneri.